Here is a 510-residue protein sequence, read N- to C-terminus: Archaeosine synthase subunit alpha (510 aa).

Residues 427–510 form the PUA domain; sequence LGKFTINKAS…LKKGIAVKVR (84 aa).

Belongs to the archaeosine synthase type 1 family. As to quaternary structure, forms a robust complex with the archaeosine synthase beta subunit RaSEA, likely an alpha(2)beta(2) heterotetrameric structure. Formation of this complex highly increases lysine transfer activity.

The catalysed reaction is 7-cyano-7-carbaguanosine(15) in tRNA + L-lysine = 7-N-[(5S)-5-amino-5-carboxypentyl]formamidino-7-deazaguanosine(15) in tRNA. The protein operates within tRNA modification; archaeosine-tRNA biosynthesis. Functionally, functions in the biosynthesis of archaeosine, a modified nucleoside present in the dihydrouridine loop (D-loop) of archaeal tRNAs. Catalyzes the addition of L-lysine to the cyano group of 7-cyano-7-deazaguanine (preQ0)-modified tRNAs at position 15, to generate q0kN15-tRNA, a q0N lysine adduct identified as 7-N-[(5S)-5-amino-5-carboxypentyl]formamidino-7-deazaguanosine. The protein is Archaeosine synthase subunit alpha of Thermoplasma acidophilum (strain ATCC 25905 / DSM 1728 / JCM 9062 / NBRC 15155 / AMRC-C165).